We begin with the raw amino-acid sequence, 131 residues long: Sec-independent protein translocase protein TatB (131 aa).

A helical transmembrane segment spans residues 2–22 (FDGIGFMELLLIGVLGLVVLG). Residues 69–131 (NQGLKNLAPE…ENAKSDKPNG (63 aa)) are disordered. The segment covering 105 to 123 (AKETPAKETATTETTSTEN) has biased composition (low complexity).

It belongs to the TatB family. The Tat system comprises two distinct complexes: a TatABC complex, containing multiple copies of TatA, TatB and TatC subunits, and a separate TatA complex, containing only TatA subunits. Substrates initially bind to the TatABC complex, which probably triggers association of the separate TatA complex to form the active translocon.

The protein resides in the cell inner membrane. In terms of biological role, part of the twin-arginine translocation (Tat) system that transports large folded proteins containing a characteristic twin-arginine motif in their signal peptide across membranes. Together with TatC, TatB is part of a receptor directly interacting with Tat signal peptides. TatB may form an oligomeric binding site that transiently accommodates folded Tat precursor proteins before their translocation. The chain is Sec-independent protein translocase protein TatB from Shewanella piezotolerans (strain WP3 / JCM 13877).